A 699-amino-acid polypeptide reads, in one-letter code: Elongation factor G (699 aa).

The tr-type G domain occupies 8-283 (EHIRNIGICA…AVVDFLPSPI (276 aa)). GTP contacts are provided by residues 17–24 (AHIDAGKT), 81–85 (DTPGH), and 135–138 (NKMD).

This sequence belongs to the TRAFAC class translation factor GTPase superfamily. Classic translation factor GTPase family. EF-G/EF-2 subfamily.

Its subcellular location is the cytoplasm. Catalyzes the GTP-dependent ribosomal translocation step during translation elongation. During this step, the ribosome changes from the pre-translocational (PRE) to the post-translocational (POST) state as the newly formed A-site-bound peptidyl-tRNA and P-site-bound deacylated tRNA move to the P and E sites, respectively. Catalyzes the coordinated movement of the two tRNA molecules, the mRNA and conformational changes in the ribosome. The chain is Elongation factor G from Rickettsia felis (strain ATCC VR-1525 / URRWXCal2) (Rickettsia azadi).